The following is an 88-amino-acid chain: Small ribosomal subunit protein uS17 (88 aa).

This sequence belongs to the universal ribosomal protein uS17 family. As to quaternary structure, part of the 30S ribosomal subunit.

Functionally, one of the primary rRNA binding proteins, it binds specifically to the 5'-end of 16S ribosomal RNA. This is Small ribosomal subunit protein uS17 from Leuconostoc mesenteroides subsp. mesenteroides (strain ATCC 8293 / DSM 20343 / BCRC 11652 / CCM 1803 / JCM 6124 / NCDO 523 / NBRC 100496 / NCIMB 8023 / NCTC 12954 / NRRL B-1118 / 37Y).